Here is a 217-residue protein sequence, read N- to C-terminus: GrpE protein homolog 1, mitochondrial (217 aa).

The N-terminal 27 residues, 1 to 27, are a transit peptide targeting the mitochondrion; sequence MAARCVRLARRSLPALALSFRPSPRLL. Residues 37 to 56 are disordered; the sequence is GQNLDEDLGHCEPKTDPPSA. Residue Lys94 is modified to N6-acetyllysine; alternate. At Lys94 the chain carries N6-succinyllysine; alternate. The residue at position 100 (Lys100) is an N6-acetyllysine. Lys120 bears the N6-succinyllysine mark. Lys215 is modified (N6-acetyllysine; alternate). Lys215 carries the N6-succinyllysine; alternate modification.

This sequence belongs to the GrpE family. In terms of assembly, probable component of the PAM complex at least composed of a mitochondrial HSP70 protein, GRPEL1 or GRPEL2, TIMM44, TIMM16/PAM16 and TIMM14/DNAJC19. Binds to HSP70, HSC70 and HSJ1B.

The protein resides in the mitochondrion matrix. Essential component of the PAM complex, a complex required for the translocation of transit peptide-containing proteins from the inner membrane into the mitochondrial matrix in an ATP-dependent manner. Seems to control the nucleotide-dependent binding of mitochondrial HSP70 to substrate proteins. This chain is GrpE protein homolog 1, mitochondrial (Grpel1), found in Mus musculus (Mouse).